Here is a 427-residue protein sequence, read N- to C-terminus: Phosphatidylserine decarboxylase proenzyme 1, mitochondrial (427 aa).

The N-terminal 77 residues, 1–77 (MRSYLRFSDR…RRFVYKLDQA (77 aa)), are a transit peptide targeting the mitochondrion. Residues 78 to 88 (VTAALGPNGRY) lie on the Mitochondrial matrix side of the membrane. The helical transmembrane segment at 89-107 (IAMVGMTASAVLLTFHYKF) threads the bilayer. Residues 108 to 427 (REVIAATDNV…TEDERLFAFY (320 aa)) are Mitochondrial intermembrane-facing. Catalysis depends on charge relay system; for autoendoproteolytic cleavage activity residues D210, H268, and S379. The active-site Schiff-base intermediate with substrate; via pyruvic acid; for decarboxylase activity is S379. S379 is subject to Pyruvic acid (Ser); by autocatalysis.

This sequence belongs to the phosphatidylserine decarboxylase family. PSD-B subfamily. Eukaryotic type I sub-subfamily. Heterodimer of a large membrane-associated beta subunit and a small pyruvoyl-containing alpha subunit. It depends on pyruvate as a cofactor. Is synthesized initially as an inactive proenzyme. Formation of the active enzyme involves a self-maturation process in which the active site pyruvoyl group is generated from an internal serine residue via an autocatalytic post-translational modification. Two non-identical subunits are generated from the proenzyme in this reaction, and the pyruvate is formed at the N-terminus of the alpha chain, which is derived from the carboxyl end of the proenzyme. The autoendoproteolytic cleavage occurs by a canonical serine protease mechanism, in which the side chain hydroxyl group of the serine supplies its oxygen atom to form the C-terminus of the beta chain, while the remainder of the serine residue undergoes an oxidative deamination to produce ammonia and the pyruvoyl prosthetic group on the alpha chain. During this reaction, the Ser that is part of the protease active site of the proenzyme becomes the pyruvoyl prosthetic group, which constitutes an essential element of the active site of the mature decarboxylase.

It is found in the mitochondrion. The protein localises to the mitochondrion inner membrane. The catalysed reaction is a 1,2-diacyl-sn-glycero-3-phospho-L-serine + H(+) = a 1,2-diacyl-sn-glycero-3-phosphoethanolamine + CO2. It functions in the pathway phospholipid metabolism; phosphatidylethanolamine biosynthesis; phosphatidylethanolamine from CDP-diacylglycerol: step 2/2. Catalyzes the formation of phosphatidylethanolamine (PtdEtn) from phosphatidylserine (PtdSer). Plays a central role in phospholipid metabolism and in the interorganelle trafficking of phosphatidylserine. This chain is Phosphatidylserine decarboxylase proenzyme 1, mitochondrial, found in Toxoplasma gondii (strain ATCC 50853 / GT1).